The following is a 217-amino-acid chain: Adenylate kinase (217 aa).

10 to 15 (GAGKGT) contacts ATP. An NMP region spans residues 30–59 (STGDMLRAAVKAESELGLQVKEVMASGGLV). Residues Thr-31, Arg-36, 57-59 (GLV), 85-88 (GFPR), and Gln-92 contribute to the AMP site. Residues 122–159 (GRRVHEGSGRIYHVKYDPPKVEGKDDETGEALIQREDD) are LID. ATP is bound by residues Arg-123 and 132 to 133 (IY). The AMP site is built by Arg-156 and Arg-167. Gly-203 is a binding site for ATP.

It belongs to the adenylate kinase family. As to quaternary structure, monomer.

The protein resides in the cytoplasm. It carries out the reaction AMP + ATP = 2 ADP. The protein operates within purine metabolism; AMP biosynthesis via salvage pathway; AMP from ADP: step 1/1. Functionally, catalyzes the reversible transfer of the terminal phosphate group between ATP and AMP. Plays an important role in cellular energy homeostasis and in adenine nucleotide metabolism. This is Adenylate kinase from Marinobacter nauticus (strain ATCC 700491 / DSM 11845 / VT8) (Marinobacter aquaeolei).